We begin with the raw amino-acid sequence, 247 residues long: Anionic trypsin (247 aa).

The N-terminal stretch at 1 to 15 (MNPLLILAFLGAAVA) is a signal peptide. A propeptide spans 16 to 23 (TPTDDDDK) (activation peptide). Positions 24–244 (IVGGYTCEEN…FVDWIQSTIA (221 aa)) constitute a Peptidase S1 domain. 6 cysteine pairs are disulfide-bonded: C30–C160, C48–C64, C132–C233, C139–C206, C171–C185, and C196–C220. H63 acts as the Charge relay system in catalysis. Ca(2+) contacts are provided by E75, N77, V80, and E85. The Charge relay system role is filled by D107. S200 functions as the Charge relay system in the catalytic mechanism.

It belongs to the peptidase S1 family. Ca(2+) is required as a cofactor.

The protein resides in the secreted. The protein localises to the extracellular space. The catalysed reaction is Preferential cleavage: Arg-|-Xaa, Lys-|-Xaa.. The chain is Anionic trypsin from Canis lupus familiaris (Dog).